Here is a 464-residue protein sequence, read N- to C-terminus: Siroheme synthase (464 aa).

Positions 1-203 (MDYLPLFHNL…GQETEAERLL (203 aa)) are precorrin-2 dehydrogenase /sirohydrochlorin ferrochelatase. NAD(+) is bound by residues 22–23 (EI) and 43–44 (PQ). Ser-128 carries the post-translational modification Phosphoserine. The uroporphyrinogen-III C-methyltransferase stretch occupies residues 216-464 (GEVYLVGAGP…AWFEGRQSAD (249 aa)). Pro-225 is an S-adenosyl-L-methionine binding site. Asp-248 acts as the Proton acceptor in catalysis. Lys-270 functions as the Proton donor in the catalytic mechanism. Residues 301-303 (GGD), Ile-306, 331-332 (TA), Met-383, and Gly-412 each bind S-adenosyl-L-methionine.

It in the N-terminal section; belongs to the precorrin-2 dehydrogenase / sirohydrochlorin ferrochelatase family. In the C-terminal section; belongs to the precorrin methyltransferase family.

The catalysed reaction is uroporphyrinogen III + 2 S-adenosyl-L-methionine = precorrin-2 + 2 S-adenosyl-L-homocysteine + H(+). It catalyses the reaction precorrin-2 + NAD(+) = sirohydrochlorin + NADH + 2 H(+). The enzyme catalyses siroheme + 2 H(+) = sirohydrochlorin + Fe(2+). Its pathway is cofactor biosynthesis; adenosylcobalamin biosynthesis; precorrin-2 from uroporphyrinogen III: step 1/1. The protein operates within cofactor biosynthesis; adenosylcobalamin biosynthesis; sirohydrochlorin from precorrin-2: step 1/1. It participates in porphyrin-containing compound metabolism; siroheme biosynthesis; precorrin-2 from uroporphyrinogen III: step 1/1. It functions in the pathway porphyrin-containing compound metabolism; siroheme biosynthesis; siroheme from sirohydrochlorin: step 1/1. Its pathway is porphyrin-containing compound metabolism; siroheme biosynthesis; sirohydrochlorin from precorrin-2: step 1/1. Functionally, multifunctional enzyme that catalyzes the SAM-dependent methylations of uroporphyrinogen III at position C-2 and C-7 to form precorrin-2 via precorrin-1. Then it catalyzes the NAD-dependent ring dehydrogenation of precorrin-2 to yield sirohydrochlorin. Finally, it catalyzes the ferrochelation of sirohydrochlorin to yield siroheme. The chain is Siroheme synthase from Azotobacter vinelandii (strain DJ / ATCC BAA-1303).